The sequence spans 265 residues: Putative 2-aminoethylphosphonate transport system permease protein PhnV (265 aa).

6 consecutive transmembrane segments (helical) span residues 13–33 (GVVA…VILM), 69–89 (LTIG…AALA), 104–124 (VFYL…LVAF), 131–151 (MNGT…AFTF), 185–205 (LPLL…LSMG), and 233–253 (NIAD…LLMM). An ABC transmembrane type-1 domain is found at 65 to 253 (LLASLTIGFC…LVAITLLLMM (189 aa)).

It belongs to the binding-protein-dependent transport system permease family.

The protein resides in the cell inner membrane. In terms of biological role, probably part of the PhnSTUV complex (TC 3.A.1.11.5) involved in 2-aminoethylphosphonate import. Probably responsible for the translocation of the substrate across the membrane. The protein is Putative 2-aminoethylphosphonate transport system permease protein PhnV (phnV) of Salmonella typhimurium (strain LT2 / SGSC1412 / ATCC 700720).